Consider the following 92-residue polypeptide: Small ribosomal subunit protein uS17 (92 aa).

Belongs to the universal ribosomal protein uS17 family. Part of the 30S ribosomal subunit.

Functionally, one of the primary rRNA binding proteins, it binds specifically to the 5'-end of 16S ribosomal RNA. This chain is Small ribosomal subunit protein uS17, found in Bordetella petrii (strain ATCC BAA-461 / DSM 12804 / CCUG 43448).